The sequence spans 217 residues: GTP cyclohydrolase 1 (217 aa).

3 residues coordinate Zn(2+): cysteine 109, histidine 112, and cysteine 180.

The protein belongs to the GTP cyclohydrolase I family. Toroid-shaped homodecamer, composed of two pentamers of five dimers.

It catalyses the reaction GTP + H2O = 7,8-dihydroneopterin 3'-triphosphate + formate + H(+). Its pathway is cofactor biosynthesis; 7,8-dihydroneopterin triphosphate biosynthesis; 7,8-dihydroneopterin triphosphate from GTP: step 1/1. This chain is GTP cyclohydrolase 1, found in Vibrio cholerae serotype O1 (strain ATCC 39315 / El Tor Inaba N16961).